A 579-amino-acid polypeptide reads, in one-letter code: Solute carrier family 15 member 5 (579 aa).

11 helical membrane-spanning segments follow: residues 77–97 (CQAAILNLCFIGTSILTPVFV), 110–130 (LVYICLFLHFLGTALLSVVAF), 154–174 (LFYVALLTICLGIGGVRAIVC), 191–211 (SFFNWFYWLMNLNATIVFLGI), 221–241 (ALVLLIPFMSMLMAVITLHMI), 304–324 (TFFLTLLPLFIFQLLYRMCIM), 343–363 (GFLLPIAVMNAISSLPLLILA), 386–406 (CIIAGNLFAALSVMIAGFFEI), 422–442 (VLTVSSMPCFYLILQYVLLGV), 472–492 (TLFNGFGCFTGALLVKLVYLI), and 509–529 (SFFFFLASLTLLNVLGFCSVS).

This sequence belongs to the major facilitator superfamily. Proton-dependent oligopeptide transporter (POT/PTR) (TC 2.A.17) family.

The protein resides in the membrane. In terms of biological role, proton oligopeptide cotransporter. The protein is Solute carrier family 15 member 5 (SLC15A5) of Homo sapiens (Human).